An 887-amino-acid chain; its full sequence is Valine--tRNA ligase (887 aa).

A 'HIGH' region motif is present at residues 48–58 (PNVTGVLHVGH). Residues 527–531 (KMSKS) carry the 'KMSKS' region motif. ATP is bound at residue Lys530. The stretch at 814–887 (LAGLVDIEAE…EASDRLKKLS (74 aa)) forms a coiled coil.

This sequence belongs to the class-I aminoacyl-tRNA synthetase family. ValS type 1 subfamily. As to quaternary structure, monomer.

Its subcellular location is the cytoplasm. The catalysed reaction is tRNA(Val) + L-valine + ATP = L-valyl-tRNA(Val) + AMP + diphosphate. Catalyzes the attachment of valine to tRNA(Val). As ValRS can inadvertently accommodate and process structurally similar amino acids such as threonine, to avoid such errors, it has a 'posttransfer' editing activity that hydrolyzes mischarged Thr-tRNA(Val) in a tRNA-dependent manner. The sequence is that of Valine--tRNA ligase from Desulfotalea psychrophila (strain LSv54 / DSM 12343).